The chain runs to 617 residues: MNQPAADMYYSQHMSAGQAPPPQTVTSGAMSYHSQHPPLQPTHMPQYAPQPQYSQYGYANGLTSPQSAQPASQMGQNVLPLPGVATQGFQGFDTTGQVAPPGMKPRVTATLWEDEGSLCFQVEARGICVARREDNHMINGTKLLNVAGMTRGRRDGILKSEKVRHVVKIGPMHLKGVWIPFERALDFANKEKITELLYPLFVHNIGALLYHPTNQTRTNQVMAAAERRKQEQNQMRGAPQTGAPGLPSIQQHHHHMSLPGPQQSLPSHAQMGRPSLDRAHTFPTPPTSASSVMGGNMNASDSGFQWAQGQGMGSAQGANPMSIDTGLSNARSMPATPASTPPGTTIQNMQSYQSGAQQYDNSRPMYNPSAQQSPYQATNPASQDRPVYGQPDPYAKNDMGPPTTRPATSGAPQDQKPANGIIHADQSGGQPAGDEEAEHDHDAEYTHDSGAYDASRASYNYSAPAVGNLPAEHQHLSPEMTGSPSHPPASGRATPRTAAAPQPYYSQQAGYNTPPRVPQQPSSNLYNVMSNDRGTAAGAGTGDVYQPQADMGSMSNGYASQMNGAGGIKRGRDEDDDLQRPSSGGGMDLKRRKTLLDSQVPAMAYAPPVMAQQPRRR.

The interval 1 to 79 (MNQPAADMYY…PASQMGQNVL (79 aa)) is disordered. The span at 24–34 (TVTSGAMSYHS) shows a compositional bias: polar residues. The segment covering 45–58 (PQYAPQPQYSQYGY) has biased composition (low complexity). Residues 61 to 76 (GLTSPQSAQPASQMGQ) are compositionally biased toward polar residues. In terms of domain architecture, HTH APSES-type spans 106–212 (RVTATLWEDE…HNIGALLYHP (107 aa)). The H-T-H motif DNA-binding region spans 140–161 (GTKLLNVAGMTRGRRDGILKSE). Disordered stretches follow at residues 223–274 (AAAE…MGRP), 300–451 (SDSG…DSGA), and 463–617 (APAV…PRRR). Composition is skewed to low complexity over residues 305–318 (QWAQ…AQGA) and 334–345 (PATPASTPPGTT). Polar residues-rich tracts occupy residues 346-361 (IQNM…QYDN) and 368-382 (PSAQ…NPAS). Over residues 438 to 447 (EHDHDAEYTH) the composition is skewed to basic and acidic residues. Residues 488–509 (PASGRATPRTAAAPQPYYSQQA) are compositionally biased toward low complexity. Composition is skewed to polar residues over residues 519–533 (QQPS…SNDR) and 553–563 (SMSNGYASQMN). The segment at 569–593 (KRGRDEDDDLQRPSSGGGMDLKRRK) is nuclear localization domain. Residues 599 to 617 (QVPAMAYAPPVMAQQPRRR) show a composition bias toward low complexity.

It belongs to the EFG1/PHD1/stuA family.

The protein localises to the nucleus. Transcription factor that regulates asexual reproduction. Binds the StuA-response elements (StRE) with the consensus sequence 5'-(A/T)CGCG(T/A)N(A/C)-3' at the promoters of target genes. Required for the formation of aerial hyphae, efficient conidiation, and the formation of perithecia. Essential for the generation of normal turgor pressure within the appressorium. Required for infection of intact apple fruit and penetration of onion epidermal cells. In Colletotrichum gloeosporioides (Anthracnose fungus), this protein is Cell pattern formation-associated protein STUA.